The primary structure comprises 120 residues: Crustacean hyperglycemic hormones 1 (120 aa).

Positions 1-27 (MTAFRMVWSMLLASLLMLLVASSTAPA) are cleaved as a signal peptide. Intrachain disulfides connect cysteine 53–cysteine 89, cysteine 69–cysteine 85, and cysteine 72–cysteine 98. Valine 118 is subject to Valine amide.

Belongs to the arthropod CHH/MIH/GIH/VIH hormone family.

It is found in the secreted. Functionally, hormone found in the sinus gland of isopods and decapods which controls the blood sugar level. Has a secretagogue action over the amylase released from the midgut gland. May act as a stress hormone and may be involved in the control of molting and reproduction. This Penaeus monodon (Giant tiger prawn) protein is Crustacean hyperglycemic hormones 1 (CHH1).